Here is a 265-residue protein sequence, read N- to C-terminus: MPKNILIFDSGIGGLSVFKDIRYQIPLAKYIYAFDNAGFPYGELTEDILIERTSYIIQKLCHRHKIDIVVIACNTASTVVLPTLRTLLSIPVVGVVPAIKPAALVSQKIGLLATPATIKRSYTFDLIKSFASISDVKLLGSTRLVEMAEEKMVGIPVNLIELDEILKSWKGQVDCIVLGCTHFPFLRKEIKEILGRNVLLIDSGEAIARRVKQLLGSVDANKGDHLFGEVYCSASTKNEEALNKTFKELDFNPLQTLGYPKSLDR.

Residues 9–10 and 41–42 each bind substrate; these read DS and YG. Cysteine 73 (proton donor/acceptor) is an active-site residue. 74–75 is a binding site for substrate; sequence NT. Cysteine 180 (proton donor/acceptor) is an active-site residue. 181–182 is a substrate binding site; sequence TH.

The protein belongs to the aspartate/glutamate racemases family.

It catalyses the reaction L-glutamate = D-glutamate. It participates in cell wall biogenesis; peptidoglycan biosynthesis. Functionally, provides the (R)-glutamate required for cell wall biosynthesis. This is Glutamate racemase from Aliivibrio salmonicida (strain LFI1238) (Vibrio salmonicida (strain LFI1238)).